The sequence spans 344 residues: tRNA N6-adenosine threonylcarbamoyltransferase (344 aa).

Fe cation-binding residues include His-111 and His-115. Residues 134–138, Asp-167, Gly-180, and Asn-277 each bind substrate; that span reads LVSGG. Position 305 (Asp-305) interacts with Fe cation.

It belongs to the KAE1 / TsaD family. The cofactor is Fe(2+).

It localises to the cytoplasm. It carries out the reaction L-threonylcarbamoyladenylate + adenosine(37) in tRNA = N(6)-L-threonylcarbamoyladenosine(37) in tRNA + AMP + H(+). In terms of biological role, required for the formation of a threonylcarbamoyl group on adenosine at position 37 (t(6)A37) in tRNAs that read codons beginning with adenine. Is involved in the transfer of the threonylcarbamoyl moiety of threonylcarbamoyl-AMP (TC-AMP) to the N6 group of A37, together with TsaE and TsaB. TsaD likely plays a direct catalytic role in this reaction. This chain is tRNA N6-adenosine threonylcarbamoyltransferase, found in Glaesserella parasuis serovar 5 (strain SH0165) (Haemophilus parasuis).